We begin with the raw amino-acid sequence, 318 residues long: L-lactate dehydrogenase (318 aa).

NAD(+)-binding positions include V18, D39, K44, Y69, and 83 to 84 (GA). Residues Q86 and R92 each contribute to the substrate site. NAD(+)-binding positions include S105, 122–124 (VSN), and S147. 124 to 127 (NPVD) serves as a coordination point for substrate. Substrate is bound at residue 152-155 (DTSR). H179 serves as the catalytic Proton acceptor. Position 225 is a phosphotyrosine (Y225). Residue T234 coordinates substrate.

Belongs to the LDH/MDH superfamily. LDH family. As to quaternary structure, homotetramer.

It localises to the cytoplasm. It catalyses the reaction (S)-lactate + NAD(+) = pyruvate + NADH + H(+). Its pathway is fermentation; pyruvate fermentation to lactate; (S)-lactate from pyruvate: step 1/1. Its function is as follows. Catalyzes the conversion of lactate to pyruvate. The chain is L-lactate dehydrogenase from Clostridium botulinum (strain 657 / Type Ba4).